The sequence spans 183 residues: Peptidyl-tRNA hydrolase (183 aa).

Residue Y14 participates in tRNA binding. H19 (proton acceptor) is an active-site residue. TRNA-binding residues include F64 and N66.

This sequence belongs to the PTH family. Monomer.

It localises to the cytoplasm. The catalysed reaction is an N-acyl-L-alpha-aminoacyl-tRNA + H2O = an N-acyl-L-amino acid + a tRNA + H(+). In terms of biological role, hydrolyzes ribosome-free peptidyl-tRNAs (with 1 or more amino acids incorporated), which drop off the ribosome during protein synthesis, or as a result of ribosome stalling. Its function is as follows. Catalyzes the release of premature peptidyl moieties from peptidyl-tRNA molecules trapped in stalled 50S ribosomal subunits, and thus maintains levels of free tRNAs and 50S ribosomes. The chain is Peptidyl-tRNA hydrolase from Syntrophomonas wolfei subsp. wolfei (strain DSM 2245B / Goettingen).